Here is a 243-residue protein sequence, read N- to C-terminus: Geranylgeranylglyceryl phosphate synthase (243 aa).

Residues aspartate 29 and serine 58 each contribute to the Mg(2+) site. Sn-glycerol 1-phosphate contacts are provided by residues 178–184 (YLEAGSG), 209–210 (GG), and 231–232 (GT).

This sequence belongs to the GGGP/HepGP synthase family. Group II subfamily. Homodimer. The cofactor is Mg(2+).

The enzyme catalyses sn-glycerol 1-phosphate + (2E,6E,10E)-geranylgeranyl diphosphate = sn-3-O-(geranylgeranyl)glycerol 1-phosphate + diphosphate. Its function is as follows. Prenyltransferase that catalyzes the transfer of the geranylgeranyl moiety of geranylgeranyl diphosphate (GGPP) to the C3 hydroxyl of sn-glycerol-1-phosphate (G1P). The protein is Geranylgeranylglyceryl phosphate synthase of Flavobacterium johnsoniae (strain ATCC 17061 / DSM 2064 / JCM 8514 / BCRC 14874 / CCUG 350202 / NBRC 14942 / NCIMB 11054 / UW101) (Cytophaga johnsonae).